Reading from the N-terminus, the 396-residue chain is Elongation factor Tu 2 (396 aa).

The 197-residue stretch at 10–206 (KPHVNVGTIG…ALDTYIPTPE (197 aa)) folds into the tr-type G domain. Positions 19 to 26 (GHVDHGKT) are G1. 19-26 (GHVDHGKT) contributes to the GTP binding site. Threonine 26 provides a ligand contact to Mg(2+). Residues 60–64 (GITIN) are G2. The interval 81–84 (DCPG) is G3. Residues 81–85 (DCPGH) and 136–139 (NKAD) contribute to the GTP site. Positions 136-139 (NKAD) are G4. Residues 174 to 176 (SAK) form a G5 region.

The protein belongs to the TRAFAC class translation factor GTPase superfamily. Classic translation factor GTPase family. EF-Tu/EF-1A subfamily. Monomer.

Its subcellular location is the cytoplasm. It carries out the reaction GTP + H2O = GDP + phosphate + H(+). Functionally, GTP hydrolase that promotes the GTP-dependent binding of aminoacyl-tRNA to the A-site of ribosomes during protein biosynthesis. The sequence is that of Elongation factor Tu 2 from Methylobacillus flagellatus (strain ATCC 51484 / DSM 6875 / VKM B-1610 / KT).